The chain runs to 537 residues: Cytochrome P450 monooxygenase alt2 (537 aa).

Residues 4–24 form a helical membrane-spanning segment; sequence HLLILAAVVLLIIHIVNNFLI. C474 is a heme binding site.

The protein belongs to the cytochrome P450 family. Heme serves as cofactor.

The protein resides in the membrane. The protein operates within secondary metabolite biosynthesis. Functionally, cytochrome P450 monooxygenase; part of the gene cluster that mediates the biosynthesis of alternapyrone derivatives. Alternapyrone is a decaketide with octa-methylation from methionine on every C2 unit except the third unit. All the domains in the polyketide synthase alt5 are apparently involved in alternapyrone synthesis, that is, the 8 CMeT, 7 KR, 7 DH, and 4 ER reactions in the 9 KS-mediated condensation steps required for alternapyrone synthesis. the alternapyrone produced by alt5 might be intensively modified by cytochrome P450 monooxygenases alt1, alt2 and alt3 and FAD-dependent oxidoreductase alt4 present in the alt gene cluster. The protein is Cytochrome P450 monooxygenase alt2 of Alternaria solani.